Consider the following 157-residue polypeptide: Arginine repressor (157 aa).

This sequence belongs to the ArgR family.

It localises to the cytoplasm. The protein operates within amino-acid biosynthesis; L-arginine biosynthesis [regulation]. Regulates arginine biosynthesis genes. This chain is Arginine repressor, found in Colwellia psychrerythraea (strain 34H / ATCC BAA-681) (Vibrio psychroerythus).